We begin with the raw amino-acid sequence, 183 residues long: Adenine phosphoribosyltransferase (183 aa).

It belongs to the purine/pyrimidine phosphoribosyltransferase family. As to quaternary structure, homodimer.

It localises to the cytoplasm. It catalyses the reaction AMP + diphosphate = 5-phospho-alpha-D-ribose 1-diphosphate + adenine. The protein operates within purine metabolism; AMP biosynthesis via salvage pathway; AMP from adenine: step 1/1. In terms of biological role, catalyzes a salvage reaction resulting in the formation of AMP, that is energically less costly than de novo synthesis. The polypeptide is Adenine phosphoribosyltransferase (Shewanella halifaxensis (strain HAW-EB4)).